Consider the following 55-residue polypeptide: ATP synthase protein 8 (55 aa).

The chain crosses the membrane as a helical span at residues 4–24 (LDPAPWFSMLTVSWLIIFLLI).

This sequence belongs to the ATPase protein 8 family. As to quaternary structure, F-type ATPases have 2 components, CF(1) - the catalytic core - and CF(0) - the membrane proton channel.

It is found in the mitochondrion membrane. Mitochondrial membrane ATP synthase (F(1)F(0) ATP synthase or Complex V) produces ATP from ADP in the presence of a proton gradient across the membrane which is generated by electron transport complexes of the respiratory chain. F-type ATPases consist of two structural domains, F(1) - containing the extramembraneous catalytic core and F(0) - containing the membrane proton channel, linked together by a central stalk and a peripheral stalk. During catalysis, ATP synthesis in the catalytic domain of F(1) is coupled via a rotary mechanism of the central stalk subunits to proton translocation. Part of the complex F(0) domain. Minor subunit located with subunit a in the membrane. This Petromyzon marinus (Sea lamprey) protein is ATP synthase protein 8 (MT-ATP8).